Consider the following 396-residue polypeptide: Elongation factor Tu (396 aa).

Residues 10–205 (KPHVNIGTIG…ACDESIPDPE (196 aa)) form the tr-type G domain. The interval 19–26 (GHVDHGKT) is G1. GTP is bound at residue 19–26 (GHVDHGKT). A Mg(2+)-binding site is contributed by Thr-26. The segment at 62-66 (GITIN) is G2. Residues 83-86 (DAPG) are G3. Residues 83–87 (DAPGH) and 138–141 (NKCD) contribute to the GTP site. Positions 138-141 (NKCD) are G4. The tract at residues 175 to 177 (SAL) is G5.

Belongs to the TRAFAC class translation factor GTPase superfamily. Classic translation factor GTPase family. EF-Tu/EF-1A subfamily. In terms of assembly, monomer.

It is found in the cytoplasm. The enzyme catalyses GTP + H2O = GDP + phosphate + H(+). Its function is as follows. GTP hydrolase that promotes the GTP-dependent binding of aminoacyl-tRNA to the A-site of ribosomes during protein biosynthesis. This is Elongation factor Tu from Corynebacterium jeikeium (strain K411).